Here is a 763-residue protein sequence, read N- to C-terminus: Actin filament-associated protein 1-like 1 (763 aa).

The interval leucine 83–lysine 137 is disordered. Serine 98, serine 104, and serine 153 each carry phosphoserine. Positions threonine 169 to serine 210 are disordered. Positions leucine 175 to methionine 185 are enriched in polar residues. The region spanning aspartate 220–lysine 316 is the PH 1 domain. Residues serine 329 and serine 343 each carry the phosphoserine modification. The interval serine 343 to glycine 380 is disordered. A PH 2 domain is found at glutamate 413–glycine 507. Position 552 is a phosphotyrosine (tyrosine 552). The disordered stretch occupies residues glutamine 561–lysine 604. Residues glutamate 582–valine 591 show a composition bias toward basic and acidic residues. Residues glycine 606–glutamine 694 adopt a coiled-coil conformation. The span at serine 712 to proline 724 shows a compositional bias: polar residues. Residues serine 712–threonine 763 are disordered. The residue at position 742 (serine 742) is a Phosphoserine. A compositionally biased stretch (basic and acidic residues) spans lysine 754–threonine 763.

As to quaternary structure, interacts with CTTN.

The protein localises to the cytoplasm. Its subcellular location is the cell projection. It is found in the podosome. The protein resides in the invadopodium. It localises to the cytoskeleton. The protein localises to the stress fiber. In terms of biological role, may be involved in podosome and invadosome formation. The sequence is that of Actin filament-associated protein 1-like 1 (AFAP1L1) from Bos taurus (Bovine).